Here is a 299-residue protein sequence, read N- to C-terminus: Tyrosine recombinase XerC (299 aa).

Residues 1 to 85 (MERQLEAYCA…AVRGLYRYLN (85 aa)) form the Core-binding (CB) domain. The region spanning 106–285 (RLPKVLDTDR…DFQHLAAVYD (180 aa)) is the Tyr recombinase domain. Catalysis depends on residues Arg-146, Lys-170, His-237, Arg-240, and His-263. The O-(3'-phospho-DNA)-tyrosine intermediate role is filled by Tyr-272.

Belongs to the 'phage' integrase family. XerC subfamily. In terms of assembly, forms a cyclic heterotetrameric complex composed of two molecules of XerC and two molecules of XerD.

Its subcellular location is the cytoplasm. Functionally, site-specific tyrosine recombinase, which acts by catalyzing the cutting and rejoining of the recombining DNA molecules. The XerC-XerD complex is essential to convert dimers of the bacterial chromosome into monomers to permit their segregation at cell division. It also contributes to the segregational stability of plasmids. In Pseudomonas putida (strain W619), this protein is Tyrosine recombinase XerC.